Consider the following 593-residue polypeptide: Aspartate--tRNA(Asp/Asn) ligase (593 aa).

Glu173 serves as a coordination point for L-aspartate. The tract at residues 197 to 200 (QLFK) is aspartate. Arg219 is a binding site for L-aspartate. ATP is bound by residues 219–221 (RDE) and Gln228. His451 is an L-aspartate binding site. Position 485 (Glu485) interacts with ATP. Arg492 contributes to the L-aspartate binding site. 537-540 (GIDR) is a binding site for ATP.

Belongs to the class-II aminoacyl-tRNA synthetase family. Type 1 subfamily. As to quaternary structure, homodimer.

The protein localises to the cytoplasm. The enzyme catalyses tRNA(Asx) + L-aspartate + ATP = L-aspartyl-tRNA(Asx) + AMP + diphosphate. Its function is as follows. Aspartyl-tRNA synthetase with relaxed tRNA specificity since it is able to aspartylate not only its cognate tRNA(Asp) but also tRNA(Asn). Reaction proceeds in two steps: L-aspartate is first activated by ATP to form Asp-AMP and then transferred to the acceptor end of tRNA(Asp/Asn). This is Aspartate--tRNA(Asp/Asn) ligase from Legionella pneumophila subsp. pneumophila (strain Philadelphia 1 / ATCC 33152 / DSM 7513).